Consider the following 468-residue polypeptide: UDP-N-acetylmuramate--L-alanine ligase (468 aa).

121–127 (GSHGKTT) contributes to the ATP binding site.

It belongs to the MurCDEF family.

The protein resides in the cytoplasm. The enzyme catalyses UDP-N-acetyl-alpha-D-muramate + L-alanine + ATP = UDP-N-acetyl-alpha-D-muramoyl-L-alanine + ADP + phosphate + H(+). It participates in cell wall biogenesis; peptidoglycan biosynthesis. Functionally, cell wall formation. The polypeptide is UDP-N-acetylmuramate--L-alanine ligase (Borreliella afzelii (strain PKo) (Borrelia afzelii)).